The following is a 515-amino-acid chain: 2-isopropylmalate synthase (515 aa).

The 261-residue stretch at 4 to 264 (VKIFDTTLRD…NIGINQDTTQ (261 aa)) folds into the Pyruvate carboxyltransferase domain. Positions 13, 201, 203, and 237 each coordinate Mn(2+). Residues 390 to 515 (ELDYLSVNTG…RQTTSAQEGI (126 aa)) are regulatory domain.

The protein belongs to the alpha-IPM synthase/homocitrate synthase family. LeuA type 1 subfamily. Homodimer. Mn(2+) is required as a cofactor.

The protein localises to the cytoplasm. It carries out the reaction 3-methyl-2-oxobutanoate + acetyl-CoA + H2O = (2S)-2-isopropylmalate + CoA + H(+). Its pathway is amino-acid biosynthesis; L-leucine biosynthesis; L-leucine from 3-methyl-2-oxobutanoate: step 1/4. Functionally, catalyzes the condensation of the acetyl group of acetyl-CoA with 3-methyl-2-oxobutanoate (2-ketoisovalerate) to form 3-carboxy-3-hydroxy-4-methylpentanoate (2-isopropylmalate). The sequence is that of 2-isopropylmalate synthase from Halothermothrix orenii (strain H 168 / OCM 544 / DSM 9562).